We begin with the raw amino-acid sequence, 119 residues long: Toxin ICK-9 (119 aa).

Positions 1-19 (MMKLYSLVIIATLAAAAFA) are cleaved as a signal peptide. Disulfide bonds link C59-C74, C67-C80, C71-C116, and C73-C87.

Belongs to the neurotoxin 25 family. ICK-8 subfamily. As to expression, expressed by the venom gland.

It localises to the secreted. Functionally, ion channel inhibitor. This is Toxin ICK-9 from Trittame loki (Brush-footed trapdoor spider).